The following is a 101-amino-acid chain: Small integral membrane protein 19 (101 aa).

Residues 25–43 (ATNVYLIVILVSIGLFMYA) traverse the membrane as a helical segment.

Belongs to the SMIM19 family.

It is found in the membrane. In Xenopus tropicalis (Western clawed frog), this protein is Small integral membrane protein 19 (smim19).